The following is a 444-amino-acid chain: 3-phosphoshikimate 1-carboxyvinyltransferase (444 aa).

Lys-29, Ser-30, and Arg-34 together coordinate 3-phosphoshikimate. Lys-29 is a phosphoenolpyruvate binding site. Phosphoenolpyruvate contacts are provided by Gly-103 and Arg-132. 3-phosphoshikimate-binding residues include Ser-177, Gln-179, Asp-329, and Lys-356. Gln-179 is a phosphoenolpyruvate binding site. Asp-329 functions as the Proton acceptor in the catalytic mechanism. Residues Arg-360 and Arg-402 each coordinate phosphoenolpyruvate.

The protein belongs to the EPSP synthase family. In terms of assembly, monomer.

The protein localises to the cytoplasm. It carries out the reaction 3-phosphoshikimate + phosphoenolpyruvate = 5-O-(1-carboxyvinyl)-3-phosphoshikimate + phosphate. Its pathway is metabolic intermediate biosynthesis; chorismate biosynthesis; chorismate from D-erythrose 4-phosphate and phosphoenolpyruvate: step 6/7. Catalyzes the transfer of the enolpyruvyl moiety of phosphoenolpyruvate (PEP) to the 5-hydroxyl of shikimate-3-phosphate (S3P) to produce enolpyruvyl shikimate-3-phosphate and inorganic phosphate. This is 3-phosphoshikimate 1-carboxyvinyltransferase from Prochlorococcus marinus (strain NATL2A).